The sequence spans 204 residues: FMN-dependent NADH:quinone oxidoreductase 2 (204 aa).

FMN is bound by residues Ser-10 and 16-18; that span reads SIS.

It belongs to the azoreductase type 1 family. Homodimer. FMN serves as cofactor.

The catalysed reaction is 2 a quinone + NADH + H(+) = 2 a 1,4-benzosemiquinone + NAD(+). It catalyses the reaction N,N-dimethyl-1,4-phenylenediamine + anthranilate + 2 NAD(+) = 2-(4-dimethylaminophenyl)diazenylbenzoate + 2 NADH + 2 H(+). Functionally, quinone reductase that provides resistance to thiol-specific stress caused by electrophilic quinones. Its function is as follows. Also exhibits azoreductase activity. Catalyzes the reductive cleavage of the azo bond in aromatic azo compounds to the corresponding amines. The protein is FMN-dependent NADH:quinone oxidoreductase 2 of Jannaschia sp. (strain CCS1).